The following is a 172-amino-acid chain: Spermidine/spermine N(1)-acetyltransferase (172 aa).

In terms of domain architecture, N-acetyltransferase spans 3–172 (VKMKKCSRED…TDLIMAKTLI (170 aa)). Residues 96-98 (IYI), 105-109 (HGLGK), and 135-137 (NEN) each bind acetyl-CoA. The active-site Proton donor is Tyr142. Position 144 (Lys144) interacts with acetyl-CoA.

The protein belongs to the acetyltransferase family. As to quaternary structure, monomer.

It catalyses the reaction an alkane-alpha,omega-diamine + acetyl-CoA = an N-acetylalkane-alpha,omega-diamine + CoA + H(+). Its function is as follows. Involved in the protection against polyamine toxicity by regulating their concentration. Could also be involved in the negative control of sporulation as well as production of degradative enzymes such as alpha-amylase, levansucrase and alkaline phosphatase. Catalyzes the transfer of an acetyl group from acetyl coenzyme A (AcCoA) to an acceptor substrate and releases both CoA and the acetylated product. It possesses N1-acetyltransferase activity toward polyamine substrates including spermidine, spermine, aminopropylcadaverine, norspermidine, homospermidine, N(8)-acetylspermidine, diaminopropane and agmatine. The chain is Spermidine/spermine N(1)-acetyltransferase from Bacillus subtilis (strain 168).